The sequence spans 92 residues: Neurophysin 2 (92 aa).

7 disulfides stabilise this stretch: Cys-7/Cys-51, Cys-10/Cys-24, Cys-18/Cys-41, Cys-25/Cys-31, Cys-58/Cys-70, Cys-64/Cys-82, and Cys-71/Cys-76.

The protein belongs to the vasopressin/oxytocin family.

It localises to the secreted. Its function is as follows. Neurophysin 2 specifically binds the midbrain peptide hormone vasopressin. The chain is Neurophysin 2 (AVP) from Equus caballus (Horse).